Here is a 329-residue protein sequence, read N- to C-terminus: Gut-specific cysteine proteinase (329 aa).

The N-terminal stretch at 1–15 is a signal peptide; it reads MKFLILTALCAVTLA. Positions 16 to 84 are cleaved as a propeptide — activation peptide; that stretch reads FVPINHQSAV…ATEQEVVLAS (69 aa). 6 disulfide bridges follow: Cys-98–Cys-127, Cys-110–Cys-155, Cys-146–Cys-204, Cys-147–Cys-151, Cys-183–Cys-208, and Cys-191–Cys-196. Residue Cys-113 is part of the active site. Residues His-275 and Asn-295 contribute to the active site.

It belongs to the peptidase C1 family. Larvae exhibit strong expression in gut cells and weak expression in hypodermal cells. Adults exhibit the reverse: strong expression in hypodermal cells and weaker expression in gut cells.

Thiol protease. Has a role as a digestive enzyme. This chain is Gut-specific cysteine proteinase (cpr-1), found in Caenorhabditis elegans.